Here is a 353-residue protein sequence, read N- to C-terminus: Stachydrine N-demethylase reductase subunit Stc4 (353 aa).

The FAD-binding FR-type domain maps to 11–114 (SDAEPLECVT…IGPAGKFSIV (104 aa)). One can recognise a 2Fe-2S ferredoxin-type domain in the interval 269-353 (AEIAFALSGV…KPLRRVSVEA (85 aa)). [2Fe-2S] cluster contacts are provided by C303, C308, C311, and C341.

The protein in the N-terminal section; belongs to the FAD-binding oxidoreductase type 6 family. As to quaternary structure, the system is probably composed of an oxygenase subunit (Stc2) and two reductase subunits (Stc3 and Stc4). Requires FAD as cofactor. The cofactor is [2Fe-2S] cluster.

In terms of biological role, reductase involved in the catabolism of stachydrine (L-proline betaine), a source of carbon and nitrogen. Part of a Rieske-type oxygenase system that catalyzes the demethylation of stachydrine to produce N-methyl-L-proline (monomethylproline). This subunit is probably involved in the transfer of electrons from NAD(P)H to the catalytic subunit Stc2. The sequence is that of Stachydrine N-demethylase reductase subunit Stc4 from Rhizobium meliloti (strain 1021) (Ensifer meliloti).